Consider the following 62-residue polypeptide: Coiled-coil domain-containing protein YLR146W-A (62 aa).

Residues 14-49 (EHARMLQNEIQQLFAQLRDTNSQIRCDLNEFEQIKE) are a coiled coil.

The polypeptide is Coiled-coil domain-containing protein YLR146W-A (Saccharomyces cerevisiae (strain ATCC 204508 / S288c) (Baker's yeast)).